Here is a 142-residue protein sequence, read N- to C-terminus: Cystatin-8 (142 aa).

The N-terminal stretch at 1-19 (MAKPLWLSLILFIIPVALA) is a signal peptide. N-linked (GlcNAc...) asparagine glycosylation occurs at asparagine 39. The short motif at 77-81 (QITDR) is the Secondary area of contact element. 2 disulfide bridges follow: cysteine 95–cysteine 105 and cysteine 119–cysteine 139. Asparagine 100 carries N-linked (GlcNAc...) asparagine glycosylation.

This sequence belongs to the cystatin family. In terms of tissue distribution, proximal caput region of the epididymis. Lower expression in the testis. Within the testis it is localized to the elongating spermatids, whereas within the epididymis it is exclusively synthesized by the proximal caput epithelium.

It is found in the secreted. In terms of biological role, performs a specialized role during sperm development and maturation. In Mus musculus (Mouse), this protein is Cystatin-8 (Cst8).